Reading from the N-terminus, the 129-residue chain is MPTYNQLVRFGRKSKTRKTKSPALESNPFKSGVCLVVKTVTPKKPNSALRKIATVRLSNKRTVNAYIPGEKHSVKEHDRVLVRGGQVPDLPGVKYHIVLGAYDIAGVKGRKQGRSRYGAHRKQVAATKK.

Residues 110–129 (RKQGRSRYGAHRKQVAATKK) are disordered.

Belongs to the universal ribosomal protein uS12 family. As to quaternary structure, part of the 30S ribosomal subunit. Contacts proteins S8 and S17. May interact with IF1 in the 30S initiation complex.

In terms of biological role, with S4 and S5 plays an important role in translational accuracy. Functionally, interacts with and stabilizes bases of the 16S rRNA that are involved in tRNA selection in the A site and with the mRNA backbone. Located at the interface of the 30S and 50S subunits, it traverses the body of the 30S subunit contacting proteins on the other side and probably holding the rRNA structure together. The combined cluster of proteins S8, S12 and S17 appears to hold together the shoulder and platform of the 30S subunit. This Rickettsia prowazekii (strain Madrid E) protein is Small ribosomal subunit protein uS12.